Here is a 360-residue protein sequence, read N- to C-terminus: Histidinol-phosphate aminotransferase (360 aa).

An N6-(pyridoxal phosphate)lysine modification is found at Lys-222.

This sequence belongs to the class-II pyridoxal-phosphate-dependent aminotransferase family. Histidinol-phosphate aminotransferase subfamily. As to quaternary structure, homodimer. It depends on pyridoxal 5'-phosphate as a cofactor.

The catalysed reaction is L-histidinol phosphate + 2-oxoglutarate = 3-(imidazol-4-yl)-2-oxopropyl phosphate + L-glutamate. Its pathway is amino-acid biosynthesis; L-histidine biosynthesis; L-histidine from 5-phospho-alpha-D-ribose 1-diphosphate: step 7/9. The chain is Histidinol-phosphate aminotransferase from Listeria innocua serovar 6a (strain ATCC BAA-680 / CLIP 11262).